Consider the following 247-residue polypeptide: Probable transcriptional regulatory protein YPO2055/y2255/YP_1898 (247 aa).

This sequence belongs to the TACO1 family.

The protein resides in the cytoplasm. This is Probable transcriptional regulatory protein YPO2055/y2255/YP_1898 from Yersinia pestis.